Here is a 159-residue protein sequence, read N- to C-terminus: Protein-export protein SecB (159 aa).

Belongs to the SecB family. In terms of assembly, homotetramer, a dimer of dimers. One homotetramer interacts with 1 SecA dimer.

It localises to the cytoplasm. In terms of biological role, one of the proteins required for the normal export of preproteins out of the cell cytoplasm. It is a molecular chaperone that binds to a subset of precursor proteins, maintaining them in a translocation-competent state. It also specifically binds to its receptor SecA. The sequence is that of Protein-export protein SecB from Nitrosospira multiformis (strain ATCC 25196 / NCIMB 11849 / C 71).